Reading from the N-terminus, the 677-residue chain is Elongation factor G 2 (677 aa).

The 276-residue stretch at Ser8–Glu283 folds into the tr-type G domain. GTP contacts are provided by residues Ala17–Thr24, Asp81–His85, and Asn135–Asp138.

It belongs to the TRAFAC class translation factor GTPase superfamily. Classic translation factor GTPase family. EF-G/EF-2 subfamily.

The protein resides in the cytoplasm. Functionally, catalyzes the GTP-dependent ribosomal translocation step during translation elongation. During this step, the ribosome changes from the pre-translocational (PRE) to the post-translocational (POST) state as the newly formed A-site-bound peptidyl-tRNA and P-site-bound deacylated tRNA move to the P and E sites, respectively. Catalyzes the coordinated movement of the two tRNA molecules, the mRNA and conformational changes in the ribosome. The sequence is that of Elongation factor G 2 from Syntrophus aciditrophicus (strain SB).